A 66-amino-acid chain; its full sequence is Scarabaecin (66 aa).

The N-terminal stretch at 1-26 (MKTLTFYTLLLCAALYSNFFDCKAVA) is a signal peptide. Residues Cys-46 and Cys-57 are joined by a disulfide bond.

The protein resides in the secreted. Functionally, possesses antifungal activity against phytopathogenic fungi such as P.oryzae, R.solani and B.cinerea but not against phytopathogenic bacteria. Shows weak activity against the insect pathogenic fungus B.bassiana and against S.aureus. Binds chitin. The sequence is that of Scarabaecin from Oryctes rhinoceros (Coconut rhinoceros beetle).